A 430-amino-acid chain; its full sequence is Dihydrolipoyllysine-residue acetyltransferase component of pyruvate dehydrogenase complex (430 aa).

Residues 2-77 (AFEFRLPDIG…VVGDVIVKID (76 aa)) enclose the Lipoyl-binding domain. Lys-43 carries the post-translational modification N6-lipoyllysine. Residues 80–122 (DAEDMQFKGHDDDSSSKEEPAKEEAPAEQAPVATQTEEVDENR) are disordered. Over residues 84-104 (MQFKGHDDDSSSKEEPAKEEA) the composition is skewed to basic and acidic residues. Residues 125-162 (KAMPSVRKYAREKGVNIKAVSGSGKNGRITKEDVDAYL) enclose the Peripheral subunit-binding (PSBD) domain. The segment at 164 to 199 (GGAPTASNESAASATSEEVAETPAAPAAVSLEGDFP) is disordered. A compositionally biased stretch (low complexity) spans 166-193 (APTASNESAASATSEEVAETPAAPAAVS). Residue His-401 is part of the active site.

The protein belongs to the 2-oxoacid dehydrogenase family. As to quaternary structure, forms a 24-polypeptide structural core with octahedral symmetry. Requires (R)-lipoate as cofactor.

The enzyme catalyses N(6)-[(R)-dihydrolipoyl]-L-lysyl-[protein] + acetyl-CoA = N(6)-[(R)-S(8)-acetyldihydrolipoyl]-L-lysyl-[protein] + CoA. The pyruvate dehydrogenase complex catalyzes the overall conversion of pyruvate to acetyl-CoA and CO(2). It contains multiple copies of three enzymatic components: pyruvate dehydrogenase (E1), dihydrolipoamide acetyltransferase (E2) and lipoamide dehydrogenase (E3). This is Dihydrolipoyllysine-residue acetyltransferase component of pyruvate dehydrogenase complex (pdhC) from Staphylococcus aureus (strain Mu50 / ATCC 700699).